Here is a 261-residue protein sequence, read N- to C-terminus: Early 31 kDa protein (261 aa).

The tract at residues 230–261 (INKYSADTDEEEEEEEDNAEDTEEEEEEEADQ) is disordered. Acidic residues predominate over residues 236–261 (DTDEEEEEEEDNAEDTEEEEEEEADQ).

In Frog virus 3 (isolate Goorha) (FV-3), this protein is Early 31 kDa protein.